The primary structure comprises 161 residues: ATP synthase subunit b 1 (161 aa).

A helical transmembrane segment spans residues 3–23; the sequence is LDATFYALVGLILFFVLIAYL.

The protein belongs to the ATPase B chain family. F-type ATPases have 2 components, F(1) - the catalytic core - and F(0) - the membrane proton channel. F(1) has five subunits: alpha(3), beta(3), gamma(1), delta(1), epsilon(1). F(0) has three main subunits: a(1), b(2) and c(10-14). The alpha and beta chains form an alternating ring which encloses part of the gamma chain. F(1) is attached to F(0) by a central stalk formed by the gamma and epsilon chains, while a peripheral stalk is formed by the delta and b chains.

The protein localises to the cell inner membrane. In terms of biological role, f(1)F(0) ATP synthase produces ATP from ADP in the presence of a proton or sodium gradient. F-type ATPases consist of two structural domains, F(1) containing the extramembraneous catalytic core and F(0) containing the membrane proton channel, linked together by a central stalk and a peripheral stalk. During catalysis, ATP synthesis in the catalytic domain of F(1) is coupled via a rotary mechanism of the central stalk subunits to proton translocation. Component of the F(0) channel, it forms part of the peripheral stalk, linking F(1) to F(0). This chain is ATP synthase subunit b 1, found in Sinorhizobium medicae (strain WSM419) (Ensifer medicae).